A 581-amino-acid chain; its full sequence is Arginine--tRNA ligase (581 aa).

Positions 126–136 match the 'HIGH' region motif; that stretch reads PNLAKEMHVGH.

The protein belongs to the class-I aminoacyl-tRNA synthetase family. Monomer.

The protein localises to the cytoplasm. The catalysed reaction is tRNA(Arg) + L-arginine + ATP = L-arginyl-tRNA(Arg) + AMP + diphosphate. In Shewanella halifaxensis (strain HAW-EB4), this protein is Arginine--tRNA ligase.